A 265-amino-acid chain; its full sequence is Ribosomal RNA small subunit methyltransferase A (265 aa).

Positions 13, 15, 39, 59, 87, and 108 each coordinate S-adenosyl-L-methionine.

The protein belongs to the class I-like SAM-binding methyltransferase superfamily. rRNA adenine N(6)-methyltransferase family. RsmA subfamily.

It is found in the cytoplasm. The enzyme catalyses adenosine(1518)/adenosine(1519) in 16S rRNA + 4 S-adenosyl-L-methionine = N(6)-dimethyladenosine(1518)/N(6)-dimethyladenosine(1519) in 16S rRNA + 4 S-adenosyl-L-homocysteine + 4 H(+). Functionally, specifically dimethylates two adjacent adenosines (A1518 and A1519) in the loop of a conserved hairpin near the 3'-end of 16S rRNA in the 30S particle. May play a critical role in biogenesis of 30S subunits. The protein is Ribosomal RNA small subunit methyltransferase A of Aliarcobacter butzleri (strain RM4018) (Arcobacter butzleri).